A 459-amino-acid chain; its full sequence is Ribulose bisphosphate carboxylase (459 aa).

Asn-111 is a binding site for substrate. The active-site Proton acceptor is Lys-166. Residue Lys-168 coordinates substrate. Mg(2+)-binding residues include Lys-191, Asp-193, and Glu-194. N6-carboxylysine is present on Lys-191. Catalysis depends on His-287, which acts as the Proton acceptor. Substrate contacts are provided by Arg-288, His-321, and Ser-368.

Belongs to the RuBisCO large chain family. Type II subfamily. As to quaternary structure, homodimer. Mg(2+) serves as cofactor.

The catalysed reaction is 2 (2R)-3-phosphoglycerate + 2 H(+) = D-ribulose 1,5-bisphosphate + CO2 + H2O. The enzyme catalyses D-ribulose 1,5-bisphosphate + O2 = 2-phosphoglycolate + (2R)-3-phosphoglycerate + 2 H(+). RuBisCO catalyzes two reactions: the carboxylation of D-ribulose 1,5-bisphosphate, the primary event in carbon dioxide fixation, as well as the oxidative fragmentation of the pentose substrate. Both reactions occur simultaneously and in competition at the same active site. The sequence is that of Ribulose bisphosphate carboxylase from Dechloromonas aromatica (strain RCB).